Consider the following 141-residue polypeptide: Putative pre-16S rRNA nuclease (141 aa).

The protein belongs to the YqgF nuclease family.

The protein localises to the cytoplasm. Functionally, could be a nuclease involved in processing of the 5'-end of pre-16S rRNA. The polypeptide is Putative pre-16S rRNA nuclease (Clostridioides difficile (strain 630) (Peptoclostridium difficile)).